The chain runs to 398 residues: MAAGGGGGGVSRAALARPPIHRGTSAPGGAIAAAGGDGDGDEASRLLGRAQPREAPYLIPRPDGDLAVPDDLQYATLDLTGDPVAVGAGSYGSVLVYGSVAVKTLRAGFGHEAVMTLLAAEEARSAGVRGVVRLMGLSAPLRQLMFPAYEMDMDAYRRSLTARPGHVVHALGRVFTELGRALVFLNGRGLSHLDVKGGNIFVRTCGNMVVTAVIGDFSLMALNSRSALADPRFRLARRKALKITSLARSPPTGVLLGHARDRPTRVLMDFINGRPPPPGPLPYEVGLAIDLCALGHVLLDVALGLRPQRGQALTREYAVEVLARRCVLFAALLPPGSGPSAEALAGDILEEELAAGFREGVASSRPGNQPPRTVAPLLELVARFCGEDGGARFAELAA.

Residues 1–10 are compositionally biased toward gly residues; the sequence is MAAGGGGGGV. Residues 1-44 are disordered; it reads MAAGGGGGGVSRAALARPPIHRGTSAPGGAIAAAGGDGDGDEAS. Residues 80 to 398 enclose the Protein kinase domain; the sequence is TGDPVAVGAG…GGARFAELAA (319 aa). Residues 86 to 94 and Lys103 each bind ATP; that span reads VGAGSYGSV. Residue Asp194 is the Proton acceptor of the active site.

This sequence belongs to the protein kinase superfamily. Ser/Thr protein kinase family. In terms of processing, autophosphorylated.

The protein localises to the virion tegument. The protein resides in the host nucleus. It is found in the host cytoplasm. Its subcellular location is the host endoplasmic reticulum. It carries out the reaction L-seryl-[protein] + ATP = O-phospho-L-seryl-[protein] + ADP + H(+). It catalyses the reaction L-threonyl-[protein] + ATP = O-phospho-L-threonyl-[protein] + ADP + H(+). Multifunctional serine/threonine kinase that plays a role in several processes including egress of virus particles from the nucleus, modulation of the actin cytoskeleton and regulation of viral and cellular gene expression. Regulates the nuclear localization of viral envelopment factors UL34 and UL31, by phosphorylating the US3 kinase, indicating a role in nuclear egress. Disrupts host nuclear lamins, including LMNA and LMNB1. Phosphorylates the viral Fc receptor composed of glycoproteins E (gE) and I (gI). Phosphorylation of glycoprotein E (gE) by UL13 alters its subcellular localization, from the host early endosome to the plasma membrane. Participates in the transcriptional regulation of cellular and viral mRNAs mainly by phosphorylating the viral transcriptional regulator ICP22. Functions as an antagonist of the host RLR-mediated antiviral responses via suppression of the transcription of cytosolic receptors RIGI and IFIH1. Facilitates immune evasion also by recruiting host RNF5 to initiate the 'Lys-27'-/'Lys-29'-linked polyubiquitination of STING1; leading to its degradation. Blocks host IFN-beta transactivation mediated by the cGAS-STING pathway by phosphorylating host IRF3. In turn, IRF3 binding to the IRF3-responsive promoters and downstream interferon stimulated genes/ISG expression are greatly impaired. Induces the activation of the host DNA damage response via H2AX phosphorylation to improve efficient viral replication and progeny production. The polypeptide is Serine/threonine-protein kinase UL13 (UL13) (Suid herpesvirus 1 (strain NIA-3) (SuHV-1)).